Here is a 137-residue protein sequence, read N- to C-terminus: Phosphoribosyl-AMP cyclohydrolase (137 aa).

Aspartate 84 is a binding site for Mg(2+). Cysteine 85 is a binding site for Zn(2+). Mg(2+) is bound by residues aspartate 86 and aspartate 88. Zn(2+) is bound by residues cysteine 101 and cysteine 108.

The protein belongs to the PRA-CH family. As to quaternary structure, homodimer. Mg(2+) serves as cofactor. The cofactor is Zn(2+).

The protein localises to the cytoplasm. The enzyme catalyses 1-(5-phospho-beta-D-ribosyl)-5'-AMP + H2O = 1-(5-phospho-beta-D-ribosyl)-5-[(5-phospho-beta-D-ribosylamino)methylideneamino]imidazole-4-carboxamide. The protein operates within amino-acid biosynthesis; L-histidine biosynthesis; L-histidine from 5-phospho-alpha-D-ribose 1-diphosphate: step 3/9. Catalyzes the hydrolysis of the adenine ring of phosphoribosyl-AMP. In Chlorobium phaeovibrioides (strain DSM 265 / 1930) (Prosthecochloris vibrioformis (strain DSM 265)), this protein is Phosphoribosyl-AMP cyclohydrolase.